The following is a 383-amino-acid chain: Protein phosphatase 2C homolog 4 (383 aa).

One can recognise a PPM-type phosphatase domain in the interval 51–356 (SLGLCTARGD…DDITCLVVRL (306 aa)). The Mn(2+) site is built by Asp92, Asp308, and Asp347.

This sequence belongs to the PP2C family. In terms of assembly, monomer. Mg(2+) is required as a cofactor. It depends on Mn(2+) as a cofactor.

It is found in the vacuole membrane. It carries out the reaction O-phospho-L-seryl-[protein] + H2O = L-seryl-[protein] + phosphate. It catalyses the reaction O-phospho-L-threonyl-[protein] + H2O = L-threonyl-[protein] + phosphate. In terms of biological role, has a role in the regulation of vacuole fusion. This is Protein phosphatase 2C homolog 4 (ptc4) from Schizosaccharomyces pombe (strain 972 / ATCC 24843) (Fission yeast).